The sequence spans 343 residues: Selenide, water dikinase (343 aa).

Sec16 is a catalytic residue. A non-standard amino acid (selenocysteine) is located at residue Sec16. ATP contacts are provided by residues Lys19 and 46-48 (GAE). Mg(2+) is bound at residue Asp49. ATP is bound by residues Asp66, Asp89, and 137–139 (GHT). Residue Asp89 participates in Mg(2+) binding. Asp225 provides a ligand contact to Mg(2+).

The protein belongs to the selenophosphate synthase 1 family. Class I subfamily. In terms of assembly, homodimer. It depends on Mg(2+) as a cofactor.

It carries out the reaction hydrogenselenide + ATP + H2O = selenophosphate + AMP + phosphate + 2 H(+). Synthesizes selenophosphate from selenide and ATP. This Geobacter sp. (strain M21) protein is Selenide, water dikinase.